A 393-amino-acid chain; its full sequence is Beta-ureidopropionase (393 aa).

A CN hydrolase domain is found at 72-344 (VRVGLVQNRI…DGLLVTELNL (273 aa)). Glu-119 serves as the catalytic Proton acceptor. Lys-196 acts as the Proton donor in catalysis. Cys-233 (nucleophile) is an active-site residue. Ser-378 is subject to Phosphoserine.

Belongs to the carbon-nitrogen hydrolase superfamily. BUP family. Homodimer, homotetramer, homooctamer; can also form higher homooligomers. The N-terminus is blocked. In terms of tissue distribution, detected in liver (at protein level).

The protein resides in the cytoplasm. The enzyme catalyses 3-(carbamoylamino)propanoate + H2O + 2 H(+) = beta-alanine + NH4(+) + CO2. The catalysed reaction is 3-(carbamoylamino)-2-methylpropanoate + H2O + 2 H(+) = (R)-3-amino-2-methylpropanoate + NH4(+) + CO2. Its pathway is amino-acid biosynthesis; beta-alanine biosynthesis. With respect to regulation, allosteric enzyme with positive cooperativity toward the substrate N-carbamoyl-beta-alanine at low substrate concentrations (below 12 nM). Displays no cooperativity at substrate levels above 12 nM. Its function is as follows. Catalyzes a late step in pyrimidine degradation. Converts N-carbamoyl-beta-alanine (3-ureidopropanoate) into beta-alanine, ammonia and carbon dioxide. Likewise, converts N-carbamoyl-beta-aminoisobutyrate (3-ureidoisobutyrate) into beta-aminoisobutyrate, ammonia and carbon dioxide. The polypeptide is Beta-ureidopropionase (Upb1) (Rattus norvegicus (Rat)).